Here is a 449-residue protein sequence, read N- to C-terminus: 3-phosphoshikimate 1-carboxyvinyltransferase (449 aa).

Residues 1–29 (MSHDSVPSPITARAGTPLRGRLRPPGDKS) are disordered. Positions 28, 29, and 33 each coordinate 3-phosphoshikimate. Lys28 contacts phosphoenolpyruvate. Phosphoenolpyruvate contacts are provided by Gly101 and Arg129. The 3-phosphoshikimate site is built by Ser175, Gln177, Asp330, and Lys357. Position 177 (Gln177) interacts with phosphoenolpyruvate. Asp330 serves as the catalytic Proton acceptor. Phosphoenolpyruvate is bound by residues Arg361 and Arg405.

Belongs to the EPSP synthase family. As to quaternary structure, monomer.

The protein resides in the cytoplasm. It carries out the reaction 3-phosphoshikimate + phosphoenolpyruvate = 5-O-(1-carboxyvinyl)-3-phosphoshikimate + phosphate. It participates in metabolic intermediate biosynthesis; chorismate biosynthesis; chorismate from D-erythrose 4-phosphate and phosphoenolpyruvate: step 6/7. Its function is as follows. Catalyzes the transfer of the enolpyruvyl moiety of phosphoenolpyruvate (PEP) to the 5-hydroxyl of shikimate-3-phosphate (S3P) to produce enolpyruvyl shikimate-3-phosphate and inorganic phosphate. The chain is 3-phosphoshikimate 1-carboxyvinyltransferase from Methylobacterium sp. (strain 4-46).